Reading from the N-terminus, the 648-residue chain is Forkhead box protein N1 (648 aa).

Positions 1 to 105 are disordered; sequence MVSLPPPQSD…SDKYPGFGFE (105 aa). Over residues 58-67 the composition is skewed to pro residues; that stretch reads ERTPSLPPHS. Positions 271-367 form a DNA-binding region, fork-head; sequence KPIYSYSILI…EELQKWKRKD (97 aa). 3 disordered regions span residues 392 to 445, 458 to 508, and 623 to 648; these read LGSP…LLMG, LSPG…LLAE, and LEPTPPTAPAGPSVYLSPSSKPVALA. Over residues 462 to 473 the composition is skewed to pro residues; sequence LAPPGPPQPLFP.

Expressed in thymus.

It localises to the nucleus. Its function is as follows. Transcriptional regulator which regulates the development, differentiation, and function of thymic epithelial cells (TECs) both in the prenatal and postnatal thymus. Acts as a master regulator of the TECs lineage development and is required from the onset of differentiation in progenitor TECs in the developing fetus to the final differentiation steps through which TECs mature to acquire their full functionality. Regulates, either directly or indirectly the expression of a variety of genes that mediate diverse aspects of thymus development and function, including MHC Class II, DLL4, CCL25, CTSL, CD40 and PAX1. Regulates the differentiation of the immature TECs into functional cortical TECs (cTECs) and medullary TECs (mTECs). Essential for maintenance of mTECs population in the postnatal thymus. Involved in the morphogenesis and maintenance of the three-dimensional thymic microstructure which is necessary for a fully functional thymus. Plays an important role in the maintenance of hematopoiesis and particularly T lineage progenitors within the bone marrow niche with age. Essential for the vascularization of the thymus anlage. Promotes the terminal differentiation of epithelial cells in the epidermis and hair follicles, partly by negatively regulating the activity of protein kinase C. Plays a crucial role in the early prenatal stages of T-cell ontogeny. The polypeptide is Forkhead box protein N1 (FOXN1) (Homo sapiens (Human)).